Consider the following 729-residue polypeptide: Anti-bacteriophage protein B (729 aa).

The region spanning F109 to S271 is the Helicase ATP-binding domain. A122–S129 contacts ATP. In terms of domain architecture, Helicase C-terminal spans A297 to A472.

Belongs to the helicase family. Interacts with AbpB.

In terms of biological role, part of an antiviral system composed of AbpA and AbpB; when both are expressed from a plasmid they confer resistance to phages T2, T4, T7 and lambda but not RB32 or RB69. Resistance is temperature dependent, it can be seen at 30 degrees Celsius but not at 37 or 42 degrees Celsius. The system impairs phage but not bacterial DNA synthesis (shown for T4, T7 and lambda). Partially suppressed by mutations in T4 gene 41, a replicative helicase. Functionally, deletion or mutations in this gene were selected in directed evolution experiments for resistance to intense ionizing radiation (3000 Gy). The sequence is that of Anti-bacteriophage protein B from Escherichia coli (strain K12).